Reading from the N-terminus, the 299-residue chain is CRISPR-associated endonuclease Cas1 3 (299 aa).

The Mn(2+) site is built by glutamate 143, histidine 210, and aspartate 223.

This sequence belongs to the CRISPR-associated endonuclease Cas1 family. As to quaternary structure, homodimer, forms a heterotetramer with a Cas2 homodimer. It depends on Mg(2+) as a cofactor. Mn(2+) is required as a cofactor.

In terms of biological role, CRISPR (clustered regularly interspaced short palindromic repeat), is an adaptive immune system that provides protection against mobile genetic elements (viruses, transposable elements and conjugative plasmids). CRISPR clusters contain spacers, sequences complementary to antecedent mobile elements, and target invading nucleic acids. CRISPR clusters are transcribed and processed into CRISPR RNA (crRNA). Acts as a dsDNA endonuclease. Involved in the integration of spacer DNA into the CRISPR cassette. The chain is CRISPR-associated endonuclease Cas1 3 from Methanospirillum hungatei JF-1 (strain ATCC 27890 / DSM 864 / NBRC 100397 / JF-1).